The sequence spans 315 residues: Biotin synthase (315 aa).

One can recognise a Radical SAM core domain in the interval Asn-39–Arg-266. 3 residues coordinate [4Fe-4S] cluster: Cys-54, Cys-58, and Cys-61. [2Fe-2S] cluster contacts are provided by Cys-98, Cys-129, Cys-189, and Arg-261.

It belongs to the radical SAM superfamily. Biotin synthase family. In terms of assembly, homodimer. [4Fe-4S] cluster serves as cofactor. Requires [2Fe-2S] cluster as cofactor.

It carries out the reaction (4R,5S)-dethiobiotin + (sulfur carrier)-SH + 2 reduced [2Fe-2S]-[ferredoxin] + 2 S-adenosyl-L-methionine = (sulfur carrier)-H + biotin + 2 5'-deoxyadenosine + 2 L-methionine + 2 oxidized [2Fe-2S]-[ferredoxin]. The protein operates within cofactor biosynthesis; biotin biosynthesis; biotin from 7,8-diaminononanoate: step 2/2. Catalyzes the conversion of dethiobiotin (DTB) to biotin by the insertion of a sulfur atom into dethiobiotin via a radical-based mechanism. The polypeptide is Biotin synthase (Legionella pneumophila (strain Corby)).